Consider the following 228-residue polypeptide: HTH-type transcriptional regulator ArcR (228 aa).

Position 22-141 (22-141) interacts with a nucleoside 3',5'-cyclic phosphate; it reads SYINIPVGVL…VKLFSLLSET (120 aa). The 74-residue stretch at 155–228 folds into the HTH crp-type domain; it reads KLAKERVTKI…SKNWLVSKDL (74 aa). The segment at residues 188 to 207 is a DNA-binding region (H-T-H motif); that stretch reads IQLLSDMAGISRETTSHIIN.

The protein resides in the cytoplasm. Functionally, positively regulates the expression of the arcABDCR operon under anaerobic conditions, thus playing an essential role in arginine catabolism. May also control the expression of genes encoding proteins which are involved in anaerobic metabolism. Can bind cyclic AMP. This is HTH-type transcriptional regulator ArcR (arcR) from Staphylococcus epidermidis (strain ATCC 12228 / FDA PCI 1200).